We begin with the raw amino-acid sequence, 84 residues long: U8-theraphotoxin-Hhn1c 1 (84 aa).

Positions 1 to 21 (MKVVLIVCLVWVMAMMELVSC) are cleaved as a signal peptide. 5 disulfide bridges follow: Cys-23–Cys-35, Cys-29–Cys-44, Cys-34–Cys-67, Cys-54–Cys-75, and Cys-69–Cys-81.

The protein belongs to the AVIT (prokineticin) family. In terms of tissue distribution, expressed by the venom gland.

The protein resides in the secreted. In Cyriopagopus hainanus (Chinese bird spider), this protein is U8-theraphotoxin-Hhn1c 1.